We begin with the raw amino-acid sequence, 104 residues long: MQNSQDYFYAQNRCQQQQAPSTLRTVTMAEFRRVPLPPMAEVPMLSTQNSMGSSASASASSLEMWEKDLEERLNSIDHDMNNNKFGSGELKSMFNQGKVEEMDF.

N-acetylmethionine is present on Met1. A disordered region spans residues 43-62; that stretch reads PMLSTQNSMGSSASASASSL. Residues Ser56, Ser58, and Ser60 each carry the phosphoserine; by DUN1 modification.

Homodimer; disulfide-linked. Interacts with RNR1. Phosphorylated by DUN1, a downstream effector of the Mec1/Rad53 checkpoint pathway, in response to DNA damage. This promotes ubiquitination of SML1 and targets it for degradation by the 26S proteasome.

The protein resides in the nucleus. It localises to the cytoplasm. Its function is as follows. Strong inhibitor of ribonucleotide reductase (RNR1) and is involved in regulating dNTP production. This Saccharomyces cerevisiae (strain ATCC 204508 / S288c) (Baker's yeast) protein is Ribonucleotide reductase inhibitor protein SML1 (SML1).